Consider the following 118-residue polypeptide: Ribulose bisphosphate carboxylase small subunit (118 aa).

This sequence belongs to the RuBisCO small chain family. As to quaternary structure, heterohexadecamer of 8 large and 8 small subunits.

Its function is as follows. RuBisCO catalyzes two reactions: the carboxylation of D-ribulose 1,5-bisphosphate, the primary event in carbon dioxide fixation, as well as the oxidative fragmentation of the pentose substrate. Both reactions occur simultaneously and in competition at the same active site. Although the small subunit is not catalytic it is essential for maximal activity. In Thiobacillus denitrificans (strain ATCC 25259 / T1), this protein is Ribulose bisphosphate carboxylase small subunit.